Consider the following 55-residue polypeptide: UPF0434 protein BARBAKC583_1098 (55 aa).

This sequence belongs to the UPF0434 family.

The protein is UPF0434 protein BARBAKC583_1098 of Bartonella bacilliformis (strain ATCC 35685 / KC583 / Herrer 020/F12,63).